The sequence spans 138 residues: Superoxide dismutase [Mn] (138 aa).

4 residues coordinate Mn(2+): S1, H49, D133, and H137.

It belongs to the iron/manganese superoxide dismutase family. Mn(2+) is required as a cofactor.

It carries out the reaction 2 superoxide + 2 H(+) = H2O2 + O2. In terms of biological role, destroys superoxide anion radicals which are normally produced within the cells and which are toxic to biological systems. This chain is Superoxide dismutase [Mn] (sodA), found in Mycobacterium marinum.